The chain runs to 764 residues: 5-methyltetrahydropteroyltriglutamate--homocysteine methyltransferase (764 aa).

5-methyltetrahydropteroyltri-L-glutamate contacts are provided by residues 16–19 (RELK) and Lys-121. Residues 440–442 (IGS) and Glu-493 contribute to the L-homocysteine site. L-methionine-binding positions include 440–442 (IGS) and Glu-493. Residues 524–525 (RC) and Trp-570 contribute to the 5-methyltetrahydropteroyltri-L-glutamate site. Position 608 (Asp-608) interacts with L-homocysteine. Asp-608 provides a ligand contact to L-methionine. Glu-614 contacts 5-methyltetrahydropteroyltri-L-glutamate. Positions 650, 652, and 674 each coordinate Zn(2+). His-703 functions as the Proton donor in the catalytic mechanism. Cys-735 contacts Zn(2+).

Belongs to the vitamin-B12 independent methionine synthase family. The cofactor is Zn(2+).

It carries out the reaction 5-methyltetrahydropteroyltri-L-glutamate + L-homocysteine = tetrahydropteroyltri-L-glutamate + L-methionine. The protein operates within amino-acid biosynthesis; L-methionine biosynthesis via de novo pathway; L-methionine from L-homocysteine (MetE route): step 1/1. Functionally, catalyzes the transfer of a methyl group from 5-methyltetrahydrofolate to homocysteine resulting in methionine formation. This chain is 5-methyltetrahydropteroyltriglutamate--homocysteine methyltransferase, found in Burkholderia orbicola (strain MC0-3).